Here is a 334-residue protein sequence, read N- to C-terminus: Procathepsin L (334 aa).

The N-terminal stretch at 1 to 17 is a signal peptide; that stretch reads MNLLLLLAVLCLGTALA. The propeptide at 18-113 is activation peptide; it reads TPKFDQTFSA…RLFQEPLMLK (96 aa). A Zn(2+)-binding site is contributed by Glu-122. 2 disulfide bridges follow: Cys-135/Cys-178 and Cys-169/Cys-211. Cys-138 is an active-site residue. 4 residues coordinate Zn(2+): Glu-163, Asp-184, Glu-199, and Glu-205. N-linked (GlcNAc...) (high mannose) asparagine glycosylation is present at Asn-221. Zn(2+) contacts are provided by Asp-227, Asp-250, His-253, and Asp-275. Residues Cys-269 and Cys-322 are joined by a disulfide bond. Residue His-276 is part of the active site. The propeptide occupies 289 to 290; it reads DS. Residue Asn-300 is part of the active site.

It belongs to the peptidase C1 family. In terms of assembly, dimer of a heavy and a light chain linked by disulfide bonds. Interacts with Long isoform of CD74/Ii chain; the interaction stabilizes the conformation of mature CTSL. Post-translationally, during export along the endocytic pathway, pro-CTSL undergoes several proteolytic cleavages to generate the CTSL single-chain and two-chain mature forms, composed of a heavy chain linked to a light chain by disulfide bonds. Autocleavage; produces the single-chain CTSL after cleavage of the propeptide. The cleavage can be intermolecular. Expressed in thymus, kidney and liver. Expressed in thyroid epithelial cells. Expressed in cortical thymic epithelial cells. Expressed by antigen presenting cells (APCs) such as dendritic cells and macrophages.

It is found in the lysosome. The protein resides in the apical cell membrane. The protein localises to the secreted. Its subcellular location is the extracellular space. It localises to the cytoplasmic vesicle. It is found in the secretory vesicle. The protein resides in the chromaffin granule. It carries out the reaction Specificity close to that of papain. As compared to cathepsin B, cathepsin L exhibits higher activity toward protein substrates, but has little activity on Z-Arg-Arg-NHMec, and no peptidyl-dipeptidase activity.. Its activity is regulated as follows. Long isoform of CD74/Ii chain stabilizes the conformation of mature CTSL by binding to its active site and serving as a chaperone to help maintain a pool of mature enzyme in endocytic compartments and extracellular space of APCs. IFNG enhances the conversion into the CTSL mature and active form. Inhibited by CST6. Inhibited by the glycopeptide antibiotic teicoplanin. Inhibited by amantadine. Thiol protease important for the overall degradation of proteins in lysosomes. Involved in the solubilization of cross-linked TG/thyroglobulin and in the subsequent release of thyroid hormone thyroxine (T4) by limited proteolysis of TG/thyroglobulin in the thyroid follicle lumen. In neuroendocrine chromaffin cells secretory vesicles, catalyzes the prohormone proenkephalin processing to the active enkephalin peptide neurotransmitter. In thymus, regulates CD4(+) T cell positive selection by generating the major histocompatibility complex class II (MHCII) bound peptide ligands presented by cortical thymic epithelial cells. Also mediates invariant chain processing in cortical thymic epithelial cells. Major elastin-degrading enzyme at neutral pH. Accumulates as a mature and active enzyme in the extracellular space of antigen presenting cells (APCs) to regulate degradation of the extracellular matrix in the course of inflammation. Secreted form generates endostatin from COL18A1. Critical for cardiac morphology and function. Plays an important role in hair follicle morphogenesis and cycling, as well as epidermal differentiation. Required for maximal stimulation of steroidogenesis by TIMP1. The protein is Procathepsin L of Mus musculus (Mouse).